A 260-amino-acid polypeptide reads, in one-letter code: Indole-3-glycerol phosphate synthase (260 aa).

Belongs to the TrpC family.

The catalysed reaction is 1-(2-carboxyphenylamino)-1-deoxy-D-ribulose 5-phosphate + H(+) = (1S,2R)-1-C-(indol-3-yl)glycerol 3-phosphate + CO2 + H2O. It participates in amino-acid biosynthesis; L-tryptophan biosynthesis; L-tryptophan from chorismate: step 4/5. The polypeptide is Indole-3-glycerol phosphate synthase (Bacteroides thetaiotaomicron (strain ATCC 29148 / DSM 2079 / JCM 5827 / CCUG 10774 / NCTC 10582 / VPI-5482 / E50)).